A 463-amino-acid chain; its full sequence is NADH dehydrogenase [ubiquinone] iron-sulfur protein 2, mitochondrial (463 aa).

A mitochondrion-targeting transit peptide spans 1–33; it reads MAALRALCGFRGVAAQVLRPGAGVRLPIQPSRG. Lysine 62 is modified (N6-acetyllysine). At arginine 118 the chain carries Symmetric dimethylarginine. [4Fe-4S] cluster is bound by residues cysteine 326, cysteine 332, and cysteine 347.

It belongs to the complex I 49 kDa subunit family. As to quaternary structure, core subunit of respiratory chain NADH dehydrogenase (Complex I) which is composed of 45 different subunits. Component of the iron-sulfur (IP) fragment of the enzyme. Interacts with NDUFAF3. Interacts with NDUFAF7. Interacts with CERS2. [4Fe-4S] cluster serves as cofactor. Dimethylation at Arg-118 by NDUFAF7 takes place after NDUFS2 assembles into the complex I, leading to stabilize the early intermediate complex.

The protein localises to the mitochondrion inner membrane. The catalysed reaction is a ubiquinone + NADH + 5 H(+)(in) = a ubiquinol + NAD(+) + 4 H(+)(out). In terms of biological role, core subunit of the mitochondrial membrane respiratory chain NADH dehydrogenase (Complex I) which catalyzes electron transfer from NADH through the respiratory chain, using ubiquinone as an electron acceptor. Essential for the catalytic activity and assembly of complex I. Redox-sensitive, critical component of the oxygen-sensing pathway in the pulmonary vasculature which plays a key role in acute pulmonary oxygen-sensing and hypoxic pulmonary vasoconstriction. Plays an important role in carotid body sensing of hypoxia. Essential for glia-like neural stem and progenitor cell proliferation, differentiation and subsequent oligodendrocyte or neuronal maturation. The protein is NADH dehydrogenase [ubiquinone] iron-sulfur protein 2, mitochondrial (NDUFS2) of Pan troglodytes (Chimpanzee).